The following is a 192-amino-acid chain: Cytochrome b-245 light chain (192 aa).

Topologically, residues 2-7 (GQIEWA) are cytoplasmic. A helical transmembrane segment spans residues 8–30 (MWANEQALASGLILITGGIVATA). At 31-35 (GQFAQ) the chain is on the extracellular side. Residues 36-53 (WYLGAYSIAAGVLICLLE) form a helical membrane-spanning segment. The Cytoplasmic portion of the chain corresponds to 54–69 (YPRGKRSKGSTMERCG). Residues 70–80 (QKYLTRAVKVF) lie within the membrane without spanning it. The Cytoplasmic portion of the chain corresponds to 81-86 (GPLTSN). The helical transmembrane segment at 87 to 104 (YYIRAFLHLGLSVPAGFL) threads the bilayer. Position 105 (L105) is a topological domain, extracellular. Residues 106-126 (ATILGTACLAIASSIYLLAAI) traverse the membrane as a helical segment. Residues 127-192 (HGEHWTPIET…NPMPVTDEVV (66 aa)) are Cytoplasmic-facing. The interval 134-192 (IETKPKERPQVGGTIKQPPSNPPPRPPAEARKKPSEEEVAGVPGGGPQENPMPVTDEVV) is disordered. T147 carries the post-translational modification Phosphothreonine. Residue K149 forms a Glycyl lysine isopeptide (Lys-Gly) (interchain with G-Cter in ubiquitin) linkage. Phosphoserine is present on S168.

Belongs to the p22phox family. As to quaternary structure, component of the phagocyte NADPH oxidase core complex/cytochrome b558 complex, composed of CYBB (heavy chain (beta)) and CYBA (light chain (alpha)). Component of the phagocyte NADPH oxidase complex composed of an obligatory core heterodimer formed by the membrane proteins CYBA and CYBB and the cytosolic regulatory subunits NCF1/p47-phox, NCF2/p67-phox, NCF4/p40-phox and the small GTPase RAC1 or RAC2. Interacts with NCF1 (via SH3 domain). Interacts with SH3PXD2A. Interacts with DUOX1, DUOX2 and TPO. Interacts with NOX4; this interaction mediates superoxide generation. Interacts with calprotectin (S100A8/9). Interacts with GBP7. Interacts with NOXO1. Forms a heterodimer with NOX3 and is essential for activity and cell membrane localization of NOX3. Interacts with NOX1. Phosphorylation at Thr-147 enhances NADPH oxidase activity by promoting NCF1/p47-phox binding. Post-translationally, ubiquitinated at Lys-149 likely by RNF145.

It is found in the cell membrane. Subunit of NADPH oxidase complexes that is required for the NADPH oxidase activity that generates, in various cell types, superoxide from molecular oxygen utilizing NADPH as an electron donor. Subunit of the phagocyte NADPH oxidase complex that mediates the transfer of electrons from cytosolic NADPH to O2 to produce the superoxide anion (O2(-)). In the activated complex, electrons are first transferred from NADPH to flavin adenine dinucleotide (FAD) and subsequently transferred via two heme molecules to molecular oxygen, producing superoxide through an outer-sphere reaction. Activation of the NADPH oxidase complex is initiated by the assembly of cytosolic subunits of the NADPH oxidase complex with the core NADPH oxidase complex to form a complex at the plasma membrane or phagosomal membrane. This activation process is initiated by phosphorylation dependent binding of the cytosolic NCF1/p47-phox subunit to the C-terminus of CYBA/p22-phox. Aassociates with NOX3 to form a functional NADPH oxidase constitutively generating superoxide. This is Cytochrome b-245 light chain from Tursiops truncatus (Atlantic bottle-nosed dolphin).